A 331-amino-acid polypeptide reads, in one-letter code: MADIIETPVSRRLSTVKNIIIVLSGKGGVGKSSSSVQLALSLLAQSPTNRVGLIDLDITGPSLPRMVGLDTPTATVHQSSAGWVPVYVDQGRRLGVMSIGFLLKDRGDSVVWRGPKKDGMIRQFLSEVRWGDLDYLVIDTPPGTSDEHISLLTHLHPLFTPTMSNATTPTSILISTPQTTALNDTLKSLSFTRKLSLPVMGLVENMAGYVCPCCGEISDTFGKGGGEAMAHKEGVGFLGRVPIDTVLVSLLDAVSKGEVLGEGAVEHTSDEAAEGQTNGSTEHFPLLDKYLETTSSKVWKDITQKLVDKIEQHKSDIRARLESSSETLAIA.

Residue 25–32 (GKGGVGKS) participates in ATP binding. Positions 211 and 214 each coordinate [4Fe-4S] cluster.

It belongs to the Mrp/NBP35 ATP-binding proteins family. NUBP2/CFD1 subfamily. As to quaternary structure, heterotetramer of 2 NBP35 and 2 CFD1 chains. [4Fe-4S] cluster is required as a cofactor.

The protein localises to the cytoplasm. Component of the cytosolic iron-sulfur (Fe/S) protein assembly (CIA) machinery. Required for maturation of extramitochondrial Fe-S proteins. The NBP35-CFD1 heterotetramer forms a Fe-S scaffold complex, mediating the de novo assembly of an Fe-S cluster and its transfer to target apoproteins. The polypeptide is Cytosolic Fe-S cluster assembly factor CFD1 (Cryptococcus neoformans var. neoformans serotype D (strain B-3501A) (Filobasidiella neoformans)).